The chain runs to 100 residues: Urease subunit gamma (100 aa).

Belongs to the urease gamma subunit family. As to quaternary structure, heterotrimer of UreA (gamma), UreB (beta) and UreC (alpha) subunits. Three heterotrimers associate to form the active enzyme.

The protein resides in the cytoplasm. The enzyme catalyses urea + 2 H2O + H(+) = hydrogencarbonate + 2 NH4(+). It functions in the pathway nitrogen metabolism; urea degradation; CO(2) and NH(3) from urea (urease route): step 1/1. This chain is Urease subunit gamma, found in Yersinia bercovieri.